We begin with the raw amino-acid sequence, 399 residues long: Probable 2,3-bisphosphoglycerate-independent phosphoglycerate mutase (399 aa).

This sequence belongs to the BPG-independent phosphoglycerate mutase family. A-PGAM subfamily.

It catalyses the reaction (2R)-2-phosphoglycerate = (2R)-3-phosphoglycerate. The protein operates within carbohydrate degradation; glycolysis; pyruvate from D-glyceraldehyde 3-phosphate: step 3/5. Functionally, catalyzes the interconversion of 2-phosphoglycerate and 3-phosphoglycerate. In Geobacter sulfurreducens (strain ATCC 51573 / DSM 12127 / PCA), this protein is Probable 2,3-bisphosphoglycerate-independent phosphoglycerate mutase.